Here is a 113-residue protein sequence, read N- to C-terminus: Large ribosomal subunit protein uL24 (113 aa).

The protein belongs to the universal ribosomal protein uL24 family. In terms of assembly, part of the 50S ribosomal subunit.

Functionally, one of two assembly initiator proteins, it binds directly to the 5'-end of the 23S rRNA, where it nucleates assembly of the 50S subunit. Its function is as follows. One of the proteins that surrounds the polypeptide exit tunnel on the outside of the subunit. The sequence is that of Large ribosomal subunit protein uL24 from Rickettsia prowazekii (strain Madrid E).